The sequence spans 652 residues: DNA ligase (652 aa).

NAD(+)-binding positions include 29 to 33, 78 to 79, and Glu-107; these read DAEYD and SL. The active-site N6-AMP-lysine intermediate is Lys-109. Residues Arg-130, Glu-164, Lys-278, and Lys-302 each contribute to the NAD(+) site. Cys-395, Cys-398, Cys-413, and Cys-418 together coordinate Zn(2+). Residues 577 to 652 form the BRCT domain; that stretch reads DENAALSGMT…IKDEAWLESL (76 aa).

The protein belongs to the NAD-dependent DNA ligase family. LigA subfamily. Requires Mg(2+) as cofactor. Mn(2+) serves as cofactor.

The catalysed reaction is NAD(+) + (deoxyribonucleotide)n-3'-hydroxyl + 5'-phospho-(deoxyribonucleotide)m = (deoxyribonucleotide)n+m + AMP + beta-nicotinamide D-nucleotide.. In terms of biological role, DNA ligase that catalyzes the formation of phosphodiester linkages between 5'-phosphoryl and 3'-hydroxyl groups in double-stranded DNA using NAD as a coenzyme and as the energy source for the reaction. It is essential for DNA replication and repair of damaged DNA. The protein is DNA ligase of Streptococcus suis (strain 98HAH33).